Here is a 354-residue protein sequence, read N- to C-terminus: Uroporphyrinogen decarboxylase (354 aa).

Residues 27 to 31 (RQAGR), Asp77, Tyr154, Ser209, and His327 contribute to the substrate site.

This sequence belongs to the uroporphyrinogen decarboxylase family. As to quaternary structure, homodimer.

Its subcellular location is the cytoplasm. It catalyses the reaction uroporphyrinogen III + 4 H(+) = coproporphyrinogen III + 4 CO2. It participates in porphyrin-containing compound metabolism; protoporphyrin-IX biosynthesis; coproporphyrinogen-III from 5-aminolevulinate: step 4/4. Functionally, catalyzes the decarboxylation of four acetate groups of uroporphyrinogen-III to yield coproporphyrinogen-III. This Shewanella sp. (strain ANA-3) protein is Uroporphyrinogen decarboxylase.